The following is a 607-amino-acid chain: MYPPRRIEIPCKPGVYRFEDENGRILYVGKAKNLRNRLGSYFTNARRGRRISYMLSISKKVGWTCVADDIEALRLEYSWIKEFAPPCNVKLKDDKAYPFLAVTIGEQVPRLLITRRKIQYATHFGPYPKVFHLRETVSLLHKIFQIRTCSPTNYKRAIASGMPCFEGQINKCFGPCSLKTTHLQYQKRIKNLMAFLEGQSSSLLESLKKKMLKASKNKEYEEAAILRDKIQAAQTVLSRSAVLLDETVSADFIAVVSDNSIASVQCFRVIAGRIKSVYSWHFEQQEDQSASELLSQSIIQVYDKLSLPKRIVLFDKPSYLSALSAHLNDKNIDRSLEIEIVYHPNEQERRLLETVKDNALSELERHRLRRSSDYTERHRSLFELQKYLNLNSLPVRIECFDISHLSGTNTSGSMVVFENGEPKKSAYRHFNIHIDQNNDTASMFSLICRRLRSLESVAQDSPDYPHLMIIDGGKPQLSAAVGALQEVGLKIPVFALSKRLEELWSPGVKTSLILPPNSESLFLLQKIRDESHRFALKQQTRRREAYLTSELFRIPGLGKQKVMQLLRRFSSFAEIRQASIEDISALPGFGVKTAEKIKECAEAFSLK.

Residues 11 to 89 (CKPGVYRFED…IKEFAPPCNV (79 aa)) form the GIY-YIG domain. Positions 201-236 (SSLLESLKKKMLKASKNKEYEEAAILRDKIQAAQTV) constitute a UVR domain.

The protein belongs to the UvrC family. As to quaternary structure, interacts with UvrB in an incision complex.

It is found in the cytoplasm. In terms of biological role, the UvrABC repair system catalyzes the recognition and processing of DNA lesions. UvrC both incises the 5' and 3' sides of the lesion. The N-terminal half is responsible for the 3' incision and the C-terminal half is responsible for the 5' incision. This chain is UvrABC system protein C, found in Tropheryma whipplei (strain TW08/27) (Whipple's bacillus).